A 123-amino-acid chain; its full sequence is Large ribosomal subunit protein bL12 (123 aa).

This sequence belongs to the bacterial ribosomal protein bL12 family. As to quaternary structure, homodimer. Part of the ribosomal stalk of the 50S ribosomal subunit. Forms a multimeric L10(L12)X complex, where L10 forms an elongated spine to which 2 to 4 L12 dimers bind in a sequential fashion. Binds GTP-bound translation factors.

Its function is as follows. Forms part of the ribosomal stalk which helps the ribosome interact with GTP-bound translation factors. Is thus essential for accurate translation. The protein is Large ribosomal subunit protein bL12 of Marinomonas sp. (strain MWYL1).